A 276-amino-acid chain; its full sequence is MTLAAVAQLNSSGSILKNLAICKELISQAAAKGAKCIFFPEASDFIAHNSDEAIELTNHPDCSKFIRDVRESATKHSIFVNICVHEPSKVKNKLLNSSLFIEPLHGEIISRYSKAHLFDVEIKNGPTLKESNTTLRGEAILPPCKTPLGKVGSAICFDIRFPEQAIKLRNMGAHIITYPSAFTEKTGAAHWEVLLRARALDSQCYVIAPAQGGKHNEKRASYGHSMIVDPWGTVIAQYSDISSPNGLIFADLDLNLVDHVRTYIPLLRRNDLYPTI.

The CN hydrolase domain occupies Met1–Leu254. The active-site Proton acceptor is the Glu41. The active-site Proton donor is the Lys114. Cys156 serves as the catalytic Nucleophile.

Belongs to the carbon-nitrogen hydrolase superfamily. NIT1/NIT2 family.

The protein resides in the cytoplasm. It is found in the nucleus. The chain is Probable hydrolase nit2 (nit2) from Schizosaccharomyces pombe (strain 972 / ATCC 24843) (Fission yeast).